Here is a 513-residue protein sequence, read N- to C-terminus: 2-isopropylmalate synthase (513 aa).

Positions 5 to 268 (LIIFDTTLRD…DLRVDTSQIV (264 aa)) constitute a Pyruvate carboxyltransferase domain. Mn(2+)-binding residues include Asp-14, His-202, His-204, and Asn-239. The segment at 394–513 (RLLALSQHSE…SKAERVAAQG (120 aa)) is regulatory domain.

It belongs to the alpha-IPM synthase/homocitrate synthase family. LeuA type 1 subfamily. In terms of assembly, homodimer. Mn(2+) is required as a cofactor.

It is found in the cytoplasm. The enzyme catalyses 3-methyl-2-oxobutanoate + acetyl-CoA + H2O = (2S)-2-isopropylmalate + CoA + H(+). It participates in amino-acid biosynthesis; L-leucine biosynthesis; L-leucine from 3-methyl-2-oxobutanoate: step 1/4. Functionally, catalyzes the condensation of the acetyl group of acetyl-CoA with 3-methyl-2-oxobutanoate (2-ketoisovalerate) to form 3-carboxy-3-hydroxy-4-methylpentanoate (2-isopropylmalate). In Leptothrix cholodnii (strain ATCC 51168 / LMG 8142 / SP-6) (Leptothrix discophora (strain SP-6)), this protein is 2-isopropylmalate synthase.